The sequence spans 290 residues: Xyloglucan endotransglycosylase/hydrolase protein 8 (290 aa).

An N-terminal signal peptide occupies residues 1-25; it reads MAKHLALSVAAAVAVSWLAASSAAA. Residues 26–218 form the GH16 domain; the sequence is AGFYEKFDVV…WSGAPFVVSY (193 aa). Glu-106 functions as the Nucleophile in the catalytic mechanism. Residue Glu-110 is the Proton donor of the active site. Glu-110 provides a ligand contact to xyloglucan. The N-linked (GlcNAc...) asparagine glycan is linked to Asn-114. Residues 123–125, 133–135, and 197–198 each bind xyloglucan; these read NTN, KKE, and YW. Intrachain disulfides connect Cys-226–Cys-240 and Cys-273–Cys-287. Arg-278 contributes to the xyloglucan binding site.

The protein belongs to the glycosyl hydrolase 16 family. XTH group 2 subfamily. Post-translationally, contains at least one intrachain disulfide bond essential for its enzymatic activity. In terms of tissue distribution, transcript strongly detected in leaf sheaths. Weakly or not expressed in leaf blades, roots and calli. Accumulation of transcript detected in shoot apex meristem, vascular tissues, young leaves, vascular bundles of leaf sheaths, and peripheral cylinder of the vascular bundles and fibers in the nodal region.

Its subcellular location is the secreted. The protein resides in the cell wall. It localises to the extracellular space. It is found in the apoplast. It catalyses the reaction breaks a beta-(1-&gt;4) bond in the backbone of a xyloglucan and transfers the xyloglucanyl segment on to O-4 of the non-reducing terminal glucose residue of an acceptor, which can be a xyloglucan or an oligosaccharide of xyloglucan.. Functionally, catalyzes xyloglucan endohydrolysis (XEH) and/or endotransglycosylation (XET). Cleaves and religates xyloglucan polymers, an essential constituent of the primary cell wall, and thereby participates in cell wall construction of growing tissues. May promote elongation of three internodes (II, III and IV) and may be involved in cell elongation processes. This chain is Xyloglucan endotransglycosylase/hydrolase protein 8 (XTH8), found in Oryza sativa subsp. japonica (Rice).